Here is a 208-residue protein sequence, read N- to C-terminus: Uracil phosphoribosyltransferase (208 aa).

5-phospho-alpha-D-ribose 1-diphosphate contacts are provided by residues Arg78, Arg103, and 130–138 (DPMLATGGS). Residues Ile193 and 198–200 (GDA) each bind uracil. Asp199 serves as a coordination point for 5-phospho-alpha-D-ribose 1-diphosphate.

It belongs to the UPRTase family. The cofactor is Mg(2+).

It catalyses the reaction UMP + diphosphate = 5-phospho-alpha-D-ribose 1-diphosphate + uracil. The protein operates within pyrimidine metabolism; UMP biosynthesis via salvage pathway; UMP from uracil: step 1/1. Allosterically activated by GTP. Functionally, catalyzes the conversion of uracil and 5-phospho-alpha-D-ribose 1-diphosphate (PRPP) to UMP and diphosphate. The protein is Uracil phosphoribosyltransferase of Psychromonas ingrahamii (strain DSM 17664 / CCUG 51855 / 37).